The sequence spans 540 residues: MAGGRSGSRELPETPTWAVAVVCAVLVLVSVAMEHGLHNLSHWFRRRQKKAMGDALDKIKAELMLLGFISLLLTVAQAPISKICIPKSAANILLPCKAGQDAIEEEAASDRRSLAGAGGGDYCSKFDGKVALMSAKSMHQLHIFIFVLAVFHVTYCVITMGLGRLKMKKWKKWESQTNSLEYQFAIDPSRFRFTHQTSFVKRHLGSFSSTPGLRWIVAFFRQFFGSVTKVDYLTMRQGFINAHLSQNSKFDFHKYIKRSLEDDFKVVVGISLPLWFVGILVLFLDIHGLGTLIWISFVPLIIVLLVGTKLEMVIMQMAQEIQDRATVIQGAPVVEPSNKYFWFNRPDWVLFFIHLTLFHNAFQMAHFVWTMATPGLKKCFHENIWLSIVEVIVGISLQVLCSYITFPLYALVTQMGSNMKKTIFEEQTMKALMNWRKKAMEKKKVRDADAFLAQMSVDFATPASSRSASPVHLLQDHRARSDDPPSPITVASPPAPEEDIYPVPAAAASRQLLDDPPDRRWMASSSADIADSDFSFSAQR.

The Extracellular segment spans residues 1 to 16 (MAGGRSGSRELPETPT). Residues 17 to 37 (WAVAVVCAVLVLVSVAMEHGL) form a helical membrane-spanning segment. Topologically, residues 38–60 (HNLSHWFRRRQKKAMGDALDKIK) are cytoplasmic. The helical transmembrane segment at 61–81 (AELMLLGFISLLLTVAQAPIS) threads the bilayer. The Extracellular segment spans residues 82–142 (KICIPKSAAN…MSAKSMHQLH (61 aa)). A helical membrane pass occupies residues 143 to 163 (IFIFVLAVFHVTYCVITMGLG). Residues 164–265 (RLKMKKWKKW…IKRSLEDDFK (102 aa)) are Cytoplasmic-facing. A helical transmembrane segment spans residues 266 to 286 (VVVGISLPLWFVGILVLFLDI). Position 287 (His-287) is a topological domain, extracellular. A helical transmembrane segment spans residues 288-308 (GLGTLIWISFVPLIIVLLVGT). The Cytoplasmic portion of the chain corresponds to 309–347 (KLEMVIMQMAQEIQDRATVIQGAPVVEPSNKYFWFNRPD). The chain crosses the membrane as a helical span at residues 348–368 (WVLFFIHLTLFHNAFQMAHFV). Residues 369–383 (WTMATPGLKKCFHEN) lie on the Extracellular side of the membrane. A helical membrane pass occupies residues 384-404 (IWLSIVEVIVGISLQVLCSYI). Over 405–540 (TFPLYALVTQ…DSDFSFSAQR (136 aa)) the chain is Cytoplasmic. Positions 426–447 (EQTMKALMNWRKKAMEKKKVRD) are calmodulin-binding. Residues 468-526 (ASPVHLLQDHRARSDDPPSPITVASPPAPEEDIYPVPAAAASRQLLDDPPDRRWMASSS) are disordered. Basic and acidic residues-rich tracts occupy residues 474-483 (LQDHRARSDD) and 512-521 (LLDDPPDRRW).

This sequence belongs to the MLO family.

It localises to the membrane. Functionally, may be involved in modulation of pathogen defense and leaf cell death. Activity seems to be regulated by Ca(2+)-dependent calmodulin binding and seems not to require heterotrimeric G proteins. The chain is MLO protein homolog 1 (MLO1) from Oryza sativa subsp. japonica (Rice).